The following is a 418-amino-acid chain: Bile acid-CoA:amino acid N-acyltransferase (418 aa).

Ser125 is subject to Phosphoserine. Residues Cys235, Asp328, and His362 each act as charge relay system in the active site. At Ser416 the chain carries Phosphoserine.

This sequence belongs to the C/M/P thioester hydrolase family. As to quaternary structure, monomer. Expressed in the gallbladder mucosa and pancreas. Expressed in hepatocytes (at protein level).

It is found in the cytoplasm. The protein resides in the cytosol. It localises to the peroxisome. It carries out the reaction choloyl-CoA + glycine = glycocholate + CoA + H(+). The enzyme catalyses hexadecanoyl-CoA + H2O = hexadecanoate + CoA + H(+). It catalyses the reaction choloyl-CoA + H2O = cholate + CoA + H(+). The catalysed reaction is chenodeoxycholoyl-CoA + H2O = chenodeoxycholate + CoA + H(+). It carries out the reaction eicosanoyl-CoA + H2O = eicosanoate + CoA + H(+). The enzyme catalyses octadecanoyl-CoA + H2O = octadecanoate + CoA + H(+). It catalyses the reaction docosanoyl-CoA + H2O = docosanoate + CoA + H(+). The catalysed reaction is tetracosanoyl-CoA + H2O = tetracosanoate + CoA + H(+). It carries out the reaction hexacosanoyl-CoA + H2O = hexacosanoate + CoA + H(+). The enzyme catalyses dodecanoyl-CoA + H2O = dodecanoate + CoA + H(+). It catalyses the reaction tetradecanoyl-CoA + H2O = tetradecanoate + CoA + H(+). The catalysed reaction is choloyl-CoA + taurine = taurocholate + CoA + H(+). It carries out the reaction chenodeoxycholoyl-CoA + glycine = glycochenodeoxycholate + CoA + H(+). The enzyme catalyses chenodeoxycholoyl-CoA + taurine = taurochenodeoxycholate + CoA + H(+). It catalyses the reaction eicosanoyl-CoA + glycine = N-eicosanoylglycinate + CoA + H(+). The catalysed reaction is hexacosanoyl-CoA + glycine = N-hexacosanoylglycine + CoA + H(+). It carries out the reaction docosanoyl-CoA + glycine = N-docosanoylglycine + CoA + H(+). Catalyzes the amidation of bile acids (BAs) with the amino acids taurine and glycine. More than 95% of the BAs are N-acyl amidates with glycine and taurine. Amidation of BAs in the liver with glycine or taurine prior to their excretion into bile is an important biochemical event in bile acid metabolism. This conjugation (or amidation) plays several important biological roles in that it promotes the secretion of BAs and cholesterol into bile and increases the detergent properties of BAs in the intestine, which facilitates lipid and vitamin absorption. May also act as an acyl-CoA thioesterase that regulates intracellular levels of free fatty acids. In vitro, catalyzes the hydrolysis of long- and very long-chain saturated acyl-CoAs to the free fatty acid and coenzyme A (CoASH), and conjugates glycine to these acyl-CoAs. The sequence is that of Bile acid-CoA:amino acid N-acyltransferase (BAAT) from Homo sapiens (Human).